A 507-amino-acid chain; its full sequence is Steroid 17-alpha-hydroxylase/17,20 lyase (507 aa).

Residue Cys441 coordinates heme.

Belongs to the cytochrome P450 family. The cofactor is heme.

It is found in the endoplasmic reticulum membrane. Its subcellular location is the microsome membrane. It carries out the reaction a C21-steroid + reduced [NADPH--hemoprotein reductase] + O2 = a 17alpha-hydroxy-C21-steroid + oxidized [NADPH--hemoprotein reductase] + H2O + H(+). The enzyme catalyses progesterone + reduced [NADPH--hemoprotein reductase] + O2 = 17alpha-hydroxyprogesterone + oxidized [NADPH--hemoprotein reductase] + H2O + H(+). The catalysed reaction is pregnenolone + reduced [NADPH--hemoprotein reductase] + O2 = 17alpha-hydroxypregnenolone + oxidized [NADPH--hemoprotein reductase] + H2O + H(+). It catalyses the reaction 17alpha-hydroxyprogesterone + reduced [NADPH--hemoprotein reductase] + O2 = androst-4-ene-3,17-dione + acetate + oxidized [NADPH--hemoprotein reductase] + H2O + 2 H(+). It carries out the reaction 17alpha-hydroxyprogesterone + reduced [NADPH--hemoprotein reductase] + O2 = 16alpha,17alpha-dihydroxyprogesterone + oxidized [NADPH--hemoprotein reductase] + H2O + H(+). The enzyme catalyses 16alpha,17alpha-dihydroxyprogesterone + reduced [NADPH--hemoprotein reductase] + O2 = 6beta,16alpha,17alpha-trihydroxyprogesterone + oxidized [NADPH--hemoprotein reductase] + H2O + H(+). The catalysed reaction is 17alpha-hydroxypregnenolone + reduced [NADPH--hemoprotein reductase] + O2 = 3beta-hydroxyandrost-5-en-17-one + acetate + oxidized [NADPH--hemoprotein reductase] + H2O + 2 H(+). It catalyses the reaction 16alpha,17alpha-dihydroxypregnenolone + reduced [NADPH--hemoprotein reductase] + O2 = 3beta,16alpha-dihydroxy-androst-5-en-17-one + acetate + oxidized [NADPH--hemoprotein reductase] + H2O + 2 H(+). It carries out the reaction 3beta-hydroxyandrost-5-en-17-one + reduced [NADPH--hemoprotein reductase] + O2 = 3beta,16alpha-dihydroxy-androst-5-en-17-one + oxidized [NADPH--hemoprotein reductase] + H2O + H(+). The enzyme catalyses androst-4-ene-3,17-dione + reduced [NADPH--hemoprotein reductase] + O2 = 16alpha-hydroxyandrost-4-ene-3,17-dione + oxidized [NADPH--hemoprotein reductase] + H2O + H(+). The protein operates within steroid hormone biosynthesis. Its pathway is steroid biosynthesis; glucocorticoid biosynthesis. With respect to regulation, regulated predominantly by intracellular cAMP levels. The 17,20-lyase activity is stimulated by cytochrome b5, which acts as an allosteric effector increasing the Vmax of the lyase activity. Its function is as follows. A cytochrome P450 monooxygenase involved in corticoid and androgen biosynthesis. Catalyzes 17-alpha hydroxylation of C21 steroids, which is common for both pathways. A second oxidative step, required only for androgen synthesis, involves an acyl-carbon cleavage. The 17-alpha hydroxy intermediates, as part of adrenal glucocorticoids biosynthesis pathway, are precursors of cortisol. Hydroxylates steroid hormones, pregnenolone and progesterone to form 17-alpha hydroxy metabolites, followed by the cleavage of the C17-C20 bond to form C19 steroids, dehydroepiandrosterone (DHEA) and androstenedione. Has 16-alpha hydroxylase activity. Catalyzes 16-alpha hydroxylation of 17-alpha hydroxy pregnenolone, followed by the cleavage of the C17-C20 bond to form 16-alpha-hydroxy DHEA. Also 16-alpha hydroxylates androgens, relevant for estriol synthesis. Mechanistically, uses molecular oxygen inserting one oxygen atom into a substrate, and reducing the second into a water molecule, with two electrons provided by NADPH via cytochrome P450 reductase (CPR; NADPH-ferrihemoprotein reductase). In Rattus norvegicus (Rat), this protein is Steroid 17-alpha-hydroxylase/17,20 lyase (Cyp17a1).